Here is a 473-residue protein sequence, read N- to C-terminus: MKTLYSLRRFYPVETLFNGTLALAGRDQETTGFAWWAGNARLINLSGKLLGAHVAHAGLIVFWAGAMNLFEVAHFVPEKPMYEQGLILLPHLATLGWGVGPGGEVIDTFPYFVSGVLHLISSAVLGFGGIYHALLGPETLEESFPFFGYVWKDRNKMTTILGIHLILLGLGAFLLVFKALYFGGVYDTWAPGGGDVRKITNLTLSPSILFGYLLKSPFGGEGWIVSVDDLEDIIGGHVWLGSICILGGIWHILTKPFAWARRALVWSGEAYLSYSLAALSVFGFIACCFVWFNNTAYPSEFYGPTGPEASQAQAFTFLVRDQRLGANVGSAQGPTGLGKYLMRSPTGEVIFGGETMRFWDLRAPWLEPLRGPNGLDLSRLKKDIQPWQERRSAEYMTHAPLGSLNSVGGVATEINAVNYVSPRSWLATSHFVLGFFLFVGHLWHAGRARAAAAGFEKGIDRDFEPALSMTPLN.

Residues 1-14 (MKTLYSLRRFYPVE) constitute a propeptide that is removed on maturation. Thr15 bears the N-acetylthreonine mark. Thr15 bears the Phosphothreonine mark. Transmembrane regions (helical) follow at residues 69 to 93 (LFEV…PHLA), 134 to 155 (LLGP…KDRN), 178 to 200 (KALY…RKIT), 255 to 275 (KPFA…LSYS), and 291 to 312 (WFNN…ASQA). Residue Glu367 coordinates [CaMn4O5] cluster. The helical transmembrane segment at 447–471 (RARAAAAGFEKGIDRDFEPALSMTP) threads the bilayer.

This sequence belongs to the PsbB/PsbC family. PsbC subfamily. As to quaternary structure, PSII is composed of 1 copy each of membrane proteins PsbA, PsbB, PsbC, PsbD, PsbE, PsbF, PsbH, PsbI, PsbJ, PsbK, PsbL, PsbM, PsbT, PsbX, PsbY, PsbZ, Psb30/Ycf12, at least 3 peripheral proteins of the oxygen-evolving complex and a large number of cofactors. It forms dimeric complexes. The cofactor is Binds multiple chlorophylls and provides some of the ligands for the Ca-4Mn-5O cluster of the oxygen-evolving complex. It may also provide a ligand for a Cl- that is required for oxygen evolution. PSII binds additional chlorophylls, carotenoids and specific lipids..

Its subcellular location is the plastid. It localises to the chloroplast thylakoid membrane. In terms of biological role, one of the components of the core complex of photosystem II (PSII). It binds chlorophyll and helps catalyze the primary light-induced photochemical processes of PSII. PSII is a light-driven water:plastoquinone oxidoreductase, using light energy to abstract electrons from H(2)O, generating O(2) and a proton gradient subsequently used for ATP formation. This chain is Photosystem II CP43 reaction center protein, found in Oenothera argillicola (Appalachian evening primrose).